The chain runs to 360 residues: MKTSMQSKLDQLTTRLAELNDLLSRENVTADLDQYRKLTREHAEIGPVVEHYAQWRQARADELAAQELLADASMRDFAEDELRGARDRMGRLAAELQTMLLPKDPNDERNIFVEIRAGTGGDESALFAGDLLRMYLRYAERQRWQVEMMSESPSDLGGYKEVIVRIAGYGAYSRLKFESGGHRVQRVPATETQGRIHTSACTVAVMPEADEIGEVEINPADLRIDTFRASGAGGQHINKTDSAVRVTHIPTGIVVECQDDRSQHKNKDRALKVLAARIKDKQYHEQHAKEAATRKSLIGSGDRSERIRTYNFPQGRMTDHRINLTLYKLEQIMDGDLDELIAALVSEHQAELLASLGDAE.

Q235 carries the post-translational modification N5-methylglutamine.

This sequence belongs to the prokaryotic/mitochondrial release factor family. In terms of processing, methylated by PrmC. Methylation increases the termination efficiency of RF1.

The protein resides in the cytoplasm. Its function is as follows. Peptide chain release factor 1 directs the termination of translation in response to the peptide chain termination codons UAG and UAA. The chain is Peptide chain release factor 1 from Burkholderia pseudomallei (strain 1106a).